Here is a 166-residue protein sequence, read N- to C-terminus: Small ribosomal subunit protein uS5 (166 aa).

Positions L11–V74 constitute an S5 DRBM domain.

This sequence belongs to the universal ribosomal protein uS5 family. In terms of assembly, part of the 30S ribosomal subunit. Contacts proteins S4 and S8.

In terms of biological role, with S4 and S12 plays an important role in translational accuracy. Located at the back of the 30S subunit body where it stabilizes the conformation of the head with respect to the body. This Histophilus somni (strain 2336) (Haemophilus somnus) protein is Small ribosomal subunit protein uS5.